Consider the following 295-residue polypeptide: MELIQDTSRPPLEYVKGVPLIKYFAEALGPLQSFRARPDDLLISTYPKSGTTWVSQILDMIYQGGDLEKCRRAPIFMRVPFLEFKVPGIPSGMETLKDTPAPRLLKTHLPLALLPQTLLDQKVKVVYVARNAKDVAVSYYHFYHMAKVHPEPGTWDSFLEKFMAGEVSYGSWYQHVQEWWELSHTHPVLYLFYEDMKENPKREIWKILEFVGRSLPEETVDLMVQHTSFKEMKKNPMANYTTIPQELMDHSISPFMRKGMTGDWKTTFTVAQNEHFDVDYAEKMAGCSLSFRSEL.

48–53 (KSGTTW) lines the 3'-phosphoadenylyl sulfate pocket. 106-108 (KTH) is a binding site for substrate. His108 acts as the Proton acceptor in catalysis. 3'-phosphoadenylyl sulfate-binding positions include Arg130, Ser138, Tyr193, 227 to 232 (TSFKEM), and 255 to 259 (FMRKG). Ser138 carries the phosphoserine modification.

This sequence belongs to the sulfotransferase 1 family. Homodimer.

Its subcellular location is the cytoplasm. It carries out the reaction a phenol + 3'-phosphoadenylyl sulfate = an aryl sulfate + adenosine 3',5'-bisphosphate + H(+). The enzyme catalyses 17beta-estradiol + 3'-phosphoadenylyl sulfate = 17beta-estradiol 3-sulfate + adenosine 3',5'-bisphosphate + H(+). It catalyses the reaction 4-ethylphenol + 3'-phosphoadenylyl sulfate = 4-ethylphenyl sulfate + adenosine 3',5'-bisphosphate + H(+). The catalysed reaction is 4-nitrophenol + 3'-phosphoadenylyl sulfate = 4-nitrophenyl sulfate + adenosine 3',5'-bisphosphate. It carries out the reaction dopamine + 3'-phosphoadenylyl sulfate = dopamine 3-O-sulfate + adenosine 3',5'-bisphosphate + H(+). The enzyme catalyses dopamine + 3'-phosphoadenylyl sulfate = dopamine 4-O-sulfate + adenosine 3',5'-bisphosphate + H(+). It catalyses the reaction 3,3',5-triiodo-L-thyronine + 3'-phosphoadenylyl sulfate = 3,3',5-triiodo-L-thyronine sulfate + adenosine 3',5'-bisphosphate + H(+). The catalysed reaction is 3,3',5'-triiodo-L-thyronine + 3'-phosphoadenylyl sulfate = 3,3',5'-triiodo-L-thyronine sulfate + adenosine 3',5'-bisphosphate + H(+). It carries out the reaction 3,3'-diiodo-L-thyronine + 3'-phosphoadenylyl sulfate = 3,3'-diiodo-L-thyronine sulfate + adenosine 3',5'-bisphosphate + H(+). The enzyme catalyses L-thyroxine + 3'-phosphoadenylyl sulfate = L-thyroxine sulfate + adenosine 3',5'-bisphosphate + H(+). Functionally, sulfotransferase that utilizes 3'-phospho-5'-adenylyl sulfate (PAPS) as sulfonate donor to catalyze the sulfate conjugation of a wide variety of acceptor molecules bearing a hydroxyl or an amine group. Sulfonation increases the water solubility of most compounds, and therefore their renal excretion, but it can also result in bioactivation to form active metabolites. Displays broad substrate specificity for small phenolic compounds. Plays an important role in the sulfonation of endogenous molecules such as steroid hormones. Mediates also the metabolic activation of carcinogenic N-hydroxyarylamines leading to highly reactive intermediates capable of forming DNA adducts, potentially resulting in mutagenesis. May play a role in gut microbiota-host metabolic interaction. O-sulfonates 4-ethylphenol (4-EP), a dietary tyrosine-derived metabolite produced by gut bacteria. The product 4-EPS crosses the blood-brain barrier and may negatively regulate oligodendrocyte maturation and myelination, affecting the functional connectivity of different brain regions associated with the limbic system. Catalyzes the sulfate conjugation of dopamine. Catalyzes the sulfation of T4 (L-thyroxine/3,5,3',5'-tetraiodothyronine), T3 (3,5,3'-triiodothyronine), rT3 (3,3',5'-triiodothyronine) and 3,3'-T2 (3,3'-diiodothyronine), with a substrate preference of 3,3'-T2 &gt; rT3 &gt; T3 &gt; T4. This is Sulfotransferase 1A1 (SULT1A1) from Macaca fascicularis (Crab-eating macaque).